Consider the following 267-residue polypeptide: L-aspartate dehydrogenase (267 aa).

NAD(+) is bound by residues Ala-124 and Asn-190. His-218 is an active-site residue.

The protein belongs to the L-aspartate dehydrogenase family.

The enzyme catalyses L-aspartate + NADP(+) + H2O = oxaloacetate + NH4(+) + NADPH + H(+). The catalysed reaction is L-aspartate + NAD(+) + H2O = oxaloacetate + NH4(+) + NADH + H(+). It functions in the pathway cofactor biosynthesis; NAD(+) biosynthesis; iminoaspartate from L-aspartate (dehydrogenase route): step 1/1. Its function is as follows. Specifically catalyzes the NAD or NADP-dependent dehydrogenation of L-aspartate to iminoaspartate. In Methanococcus maripaludis (strain C7 / ATCC BAA-1331), this protein is L-aspartate dehydrogenase.